The primary structure comprises 234 residues: Sugar fermentation stimulation protein homolog (234 aa).

Belongs to the SfsA family.

The chain is Sugar fermentation stimulation protein homolog from Shewanella baltica (strain OS155 / ATCC BAA-1091).